The following is a 978-amino-acid chain: Tyrosine-protein kinase transforming protein fms (978 aa).

Topologically, residues 1–543 are extracellular; that stretch reads RMPSGPGHYG…IGAHTPLPDE (543 aa). Ig-like C2-type domains follow at residues 55–134, 141–231, 236–331, 333–431, and 434–533; these read PVIQ…IHLY, PWKV…KVQK, PATL…RVVE, AYSN…LTLR, and PEVR…WPIS. An intrachain disulfide couples Cys76 to Cys118. 11 N-linked (GlcNAc...) asparagine; by host glycosylation sites follow: Asn79, Asn107, Asn128, Asn187, Asn309, Asn320, Asn336, Asn369, Asn444, Asn511, and Asn524. Cystine bridges form between Cys161–Cys211 and Cys258–Cys312. Cysteines 451 and 516 form a disulfide. A helical membrane pass occupies residues 544 to 568; it reads LLFTPVLLTCMSIMALLLLLLLLLL. Over 569–978 the chain is Cytoplasmic; the sequence is YKYKQKPKYQ…PWQRTPPVAR (410 aa). The region spanning 613–942 is the Protein kinase domain; the sequence is LQFGKTLGTG…PTFQQICSLL (330 aa). ATP-binding positions include 619-627 and Lys647; that span reads LGTGAFGKV. Catalysis depends on Asp810, which acts as the Proton acceptor. The residue at position 841 (Tyr841) is a Phosphotyrosine; by autocatalysis. A disordered region spans residues 952–978; sequence VPNYTNLPSSSSSRLLRPWQRTPPVAR. Over residues 958-969 the composition is skewed to low complexity; the sequence is LPSSSSSRLLRP. Position 973 is a phosphothreonine (Thr973).

This sequence belongs to the protein kinase superfamily. Tyr protein kinase family. CSF-1/PDGF receptor subfamily.

The protein resides in the membrane. The enzyme catalyses L-tyrosyl-[protein] + ATP = O-phospho-L-tyrosyl-[protein] + ADP + H(+). Truncated version of the receptor for colony-stimulating factor 1 (CSF-1). In Felidae (cat family), this protein is Tyrosine-protein kinase transforming protein fms (V-FMS).